The sequence spans 148 residues: Proteasome chaperone 4 (148 aa).

It belongs to the PSMG4 family. As to quaternary structure, component of the 20S proteasome chaperone. Forms a heterodimer with IRC25 that binds to proteasome precursors. Interacts with POP2.

It is found in the cytoplasm. Involved in 20S proteasome assembly, facilitating the alpha-ring formation. Involved in maintenance of telomere length. The chain is Proteasome chaperone 4 (POC4) from Saccharomyces cerevisiae (strain ATCC 204508 / S288c) (Baker's yeast).